We begin with the raw amino-acid sequence, 328 residues long: Phenylalanine--tRNA ligase alpha subunit (328 aa).

E253 lines the Mg(2+) pocket.

It belongs to the class-II aminoacyl-tRNA synthetase family. Phe-tRNA synthetase alpha subunit type 1 subfamily. As to quaternary structure, tetramer of two alpha and two beta subunits. Mg(2+) is required as a cofactor.

Its subcellular location is the cytoplasm. It carries out the reaction tRNA(Phe) + L-phenylalanine + ATP = L-phenylalanyl-tRNA(Phe) + AMP + diphosphate + H(+). The protein is Phenylalanine--tRNA ligase alpha subunit of Coxiella burnetii (strain CbuG_Q212) (Coxiella burnetii (strain Q212)).